The following is a 290-amino-acid chain: Nucleotide-binding protein FN1089 (290 aa).

11 to 18 (GLSGAGKT) serves as a coordination point for ATP. 56–59 (DIRT) is a GTP binding site.

The protein belongs to the RapZ-like family.

Functionally, displays ATPase and GTPase activities. In Fusobacterium nucleatum subsp. nucleatum (strain ATCC 25586 / DSM 15643 / BCRC 10681 / CIP 101130 / JCM 8532 / KCTC 2640 / LMG 13131 / VPI 4355), this protein is Nucleotide-binding protein FN1089.